The primary structure comprises 144 residues: Glycophorin-A (144 aa).

Polar residues predominate over residues 1 to 25 (SSTTVPATHTSSSSLGPEQYVSSQS). Residues 1–55 (SSTTVPATHTSSSSLGPEQYVSSQSNDKHTSDSHPTPTSAHEVTTEFSGRTHYPP) are disordered. An O-linked (GalNAc...) serine glycan is attached at Ser-2. Thr-3, Thr-4, Thr-8, and Thr-10 each carry an O-linked (GalNAc...) threonine glycan. 6 O-linked (GalNAc...) serine glycosylation sites follow: Ser-11, Ser-12, Ser-13, Ser-14, Ser-22, and Ser-23. Residues Thr-30, Thr-36, Thr-38, Thr-44, and Thr-45 are each glycosylated (O-linked (GalNAc...) threonine). Positions 33–48 (SHPTPTSAHEVTTEFS) are enriched in polar residues. O-linked (GalNAc...) serine glycosylation is present at Ser-48. Thr-51 carries O-linked (GalNAc...) threonine glycosylation. The chain crosses the membrane as a helical span at residues 70 to 92 (LVIALIIFGVMAGVIGTILFISY). Residues 101-144 (SESDVQPLPPPDAEVPLSSVEIEDPEETDELNSFTKPNQERNES) form a disordered region. Ser-118 bears the Phosphoserine mark. Positions 121–130 (EIEDPEETDE) are enriched in acidic residues.

The protein belongs to the glycophorin-A family. In terms of assembly, homodimer. Component of the ankyrin-1 complex in the erythrocyte, composed of ANK1, RHCE, RHAG, SLC4A1, EPB42, GYPA, GYPB and AQP1. Interacts with SLC4A1; a GYPA monomer is bound at each end of the SLC4A1 dimer forming a heterotetramer.

The protein localises to the membrane. In terms of biological role, component of the ankyrin-1 complex, a multiprotein complex involved in the stability and shape of the erythrocyte membrane. Glycophorin A is the major intrinsic membrane protein of the erythrocyte. The N-terminal glycosylated segment, which lies outside the erythrocyte membrane, has MN blood group receptors. Appears to be important for the function of SLC4A1 and is required for high activity of SLC4A1. May be involved in translocation of SLC4A1 to the plasma membrane. The chain is Glycophorin-A from Macaca fuscata fuscata (Japanese macaque).